A 205-amino-acid polypeptide reads, in one-letter code: MYHFVYETTNLINGKKYIGKHSTDDLNDGYLGSGKAIQQAIKKYGENNFSRTILKEFKTSEEAYMYEEEIITPELIKSKNYYNMKPGGIGGIVMTTDVIAKMKESSAKRFENSPGTVLGKTCYTNGTKNIFIKPGELVPEGFVKGMVHPNRKSRKGCKVKPTTTGTFWVNNGAINKLIQPDGIIPDGFIKGRLMKRDSKGKFSKA.

In terms of domain architecture, GIY-YIG spans 1–84; it reads MYHFVYETTN…LIKSKNYYNM (84 aa).

To endonucleases of group I introns of fungi and phage. Requires Mg(2+) as cofactor.

Its function is as follows. Probably involved in the movement of the endonuclease-encoding DNA. The protein is Putative endonuclease segE (segE) of Escherichia coli (Bacteriophage T4).